Consider the following 362-residue polypeptide: P2Y purinoceptor 1 (362 aa).

The Extracellular portion of the chain corresponds to 1-40; sequence MTEALISAALNGTQPELLAGGWAAGNATTKCSLTKTGFQF. N-linked (GlcNAc...) asparagine glycans are attached at residues asparagine 11 and asparagine 26. Intrachain disulfides connect cysteine 31-cysteine 285 and cysteine 113-cysteine 191. An ADP-binding site is contributed by lysine 35. A helical transmembrane segment spans residues 41–63; it reads YYLPTVYILVFITGFLGNSVAIW. Residues 64–76 are Cytoplasmic-facing; it reads MFVFHMRPWSGIS. A helical membrane pass occupies residues 77–98; it reads VYMFNLALADFLYVLTLPALIF. The Extracellular portion of the chain corresponds to 99–114; it reads YYFNKTDWIFGDVMCK. Residue asparagine 102 is glycosylated (N-linked (GlcNAc...) asparagine). A helical membrane pass occupies residues 115–136; that stretch reads LQRFIFHVNLYGSILFLTCISV. The Cytoplasmic portion of the chain corresponds to 137 to 155; the sequence is HRYTGVVHPLKSLGRLKKK. The chain crosses the membrane as a helical span at residues 156–177; that stretch reads NAVYVSSLVWALVVAVIAPILF. Over 178 to 203 the chain is Extracellular; that stretch reads YSGTGVRRNKTITCYDTTADEYLRSY. A glycan (N-linked (GlcNAc...) asparagine) is linked at asparagine 186. 192 to 194 serves as a coordination point for ADP; that stretch reads YDT. The helical transmembrane segment at 204-226 threads the bilayer; that stretch reads FVYSMCTTVFMFCIPFIVILGCY. Over 227-249 the chain is Cytoplasmic; sequence GLIVKALIYKDLDNSPLRRKSIY. Residues 250 to 273 form a helical membrane-spanning segment; that stretch reads LVIIVLTVFAVSYLPFHVMKTLNL. ADP contacts are provided by residues 272–276, 292–295, and arginine 299; these read NLRAR and YATY. Topologically, residues 274 to 292 are extracellular; sequence RARLDFQTPQMCAFNDKVY. A helical membrane pass occupies residues 293–314; the sequence is ATYQVTRGLASLNSCVDPILYF. The Cytoplasmic portion of the chain corresponds to 315 to 362; sequence LAGDTFRRRLSRATRKSSRRSEPNVQSKSEEMTLNILTEYKQNGDTSL.

This sequence belongs to the G-protein coupled receptor 1 family. In terms of tissue distribution, brain, spinal cord, gastrointestinal tract, spleen and leg muscle. Is not detected in the heart, liver, stomach, lung and kidney.

It is found in the cell membrane. In terms of biological role, receptor for extracellular adenine nucleotides such as ADP. In platelets, binding to ADP leads to mobilization of intracellular calcium ions via activation of phospholipase C, a change in platelet shape, and ultimately platelet aggregation. This Gallus gallus (Chicken) protein is P2Y purinoceptor 1 (P2RY1).